A 359-amino-acid chain; its full sequence is 3-dehydroquinate synthase (359 aa).

NAD(+) is bound by residues 69 to 74, 103 to 107, 127 to 128, Lys139, Lys148, and 166 to 169; these read SGESSK, GVVGD, TT, and TLST. The Zn(2+) site is built by Glu181, His242, and His259.

It belongs to the sugar phosphate cyclases superfamily. Dehydroquinate synthase family. NAD(+) serves as cofactor. Co(2+) is required as a cofactor. It depends on Zn(2+) as a cofactor.

It is found in the cytoplasm. The enzyme catalyses 7-phospho-2-dehydro-3-deoxy-D-arabino-heptonate = 3-dehydroquinate + phosphate. The protein operates within metabolic intermediate biosynthesis; chorismate biosynthesis; chorismate from D-erythrose 4-phosphate and phosphoenolpyruvate: step 2/7. Its function is as follows. Catalyzes the conversion of 3-deoxy-D-arabino-heptulosonate 7-phosphate (DAHP) to dehydroquinate (DHQ). In Oceanobacillus iheyensis (strain DSM 14371 / CIP 107618 / JCM 11309 / KCTC 3954 / HTE831), this protein is 3-dehydroquinate synthase.